Reading from the N-terminus, the 293-residue chain is 4-hydroxy-tetrahydrodipicolinate synthase (293 aa).

Thr44 is a pyruvate binding site. Tyr132 acts as the Proton donor/acceptor in catalysis. The Schiff-base intermediate with substrate role is filled by Lys161. Ile203 contacts pyruvate.

Belongs to the DapA family. As to quaternary structure, homotetramer; dimer of dimers.

It localises to the cytoplasm. It catalyses the reaction L-aspartate 4-semialdehyde + pyruvate = (2S,4S)-4-hydroxy-2,3,4,5-tetrahydrodipicolinate + H2O + H(+). It participates in amino-acid biosynthesis; L-lysine biosynthesis via DAP pathway; (S)-tetrahydrodipicolinate from L-aspartate: step 3/4. Its function is as follows. Catalyzes the condensation of (S)-aspartate-beta-semialdehyde [(S)-ASA] and pyruvate to 4-hydroxy-tetrahydrodipicolinate (HTPA). The sequence is that of 4-hydroxy-tetrahydrodipicolinate synthase from Persephonella marina (strain DSM 14350 / EX-H1).